Reading from the N-terminus, the 241-residue chain is Adapter protein MecA (241 aa).

The tract at residues 115 to 141 (TDSNDKNNDDSSYMSDGNPADLNGYAN) is disordered.

This sequence belongs to the MecA family. Homodimer.

Functionally, enables the recognition and targeting of unfolded and aggregated proteins to the ClpC protease or to other proteins involved in proteolysis. In Pediococcus pentosaceus (strain ATCC 25745 / CCUG 21536 / LMG 10740 / 183-1w), this protein is Adapter protein MecA.